A 256-amino-acid polypeptide reads, in one-letter code: uncharacterized protein (256 aa).

Basic and acidic residues predominate over residues 201-214 (ACKEGVDSSCKEEG). A disordered region spans residues 201–231 (ACKEGVDSSCKEEGGGCEEEGSGSEEDSDDS). A compositionally biased stretch (acidic residues) spans 215–231 (GGCEEEGSGSEEDSDDS).

It is found in the mitochondrion. This is an uncharacterized protein from Zea mays (Maize).